The following is an 85-amino-acid chain: Toxin BmKaTx10 (85 aa).

A signal peptide spans 1–19 (MNYLVMVSFALLLMTGVES). The LCN-type CS-alpha/beta domain maps to 21–83 (RDGYIALPHN…VPIRVPGRCH (63 aa)). Disulfide bonds link Cys-31–Cys-82, Cys-35–Cys-55, Cys-41–Cys-65, and Cys-45–Cys-67.

This sequence belongs to the long (4 C-C) scorpion toxin superfamily. Sodium channel inhibitor family. Alpha subfamily. Expressed by the venom gland.

Its subcellular location is the secreted. Alpha toxins bind voltage-independently at site-3 of sodium channels (Nav) and inhibit the inactivation of the activated channels, thereby blocking neuronal transmission. The chain is Toxin BmKaTx10 from Olivierus martensii (Manchurian scorpion).